Consider the following 400-residue polypeptide: Phosphoglycerate kinase (400 aa).

Substrate contacts are provided by residues 24–26, Arg39, 62–65, Arg123, and Arg156; these read DFN and HLGK. ATP-binding positions include Lys207, Gly298, Glu329, and 356-359; that span reads GGDS.

This sequence belongs to the phosphoglycerate kinase family. As to quaternary structure, monomer.

Its subcellular location is the cytoplasm. It catalyses the reaction (2R)-3-phosphoglycerate + ATP = (2R)-3-phospho-glyceroyl phosphate + ADP. It functions in the pathway carbohydrate degradation; glycolysis; pyruvate from D-glyceraldehyde 3-phosphate: step 2/5. The chain is Phosphoglycerate kinase from Clostridioides difficile (strain 630) (Peptoclostridium difficile).